The following is a 113-amino-acid chain: Death-associated protein-like 1.S (113 aa).

The disordered stretch occupies residues 1-53; that stretch reads MTKELKVQSSPQALKAGHLPAVKAGGMRVSKKQGNDENSAPEKNAKKTLQEKP.

The protein belongs to the DAP-DAPL1 family. Associates with ribosomes; preventing translation. Interacts with eiF5a (eif5a and eif5a2); preventing translation.

Ribosome-binding protein that promotes ribosome hibernation, a process during which ribosomes are stabilized in an inactive state and preserved from proteasomal degradation. Acts via its association with eiF5a (eif5a and eif5a2) at the polypeptide exit tunnel of the ribosome, preventing mRNA translation. Plays a key role in ribosome hibernation in the mature egg by preventing mRNA translation, leading to ribosome inactivation. Ribosomes, which are produced in large quantities during oogenesis, are stored and translationally repressed in the egg and early embryo. The sequence is that of Death-associated protein-like 1.S (dapl1.S) from Xenopus laevis (African clawed frog).